The primary structure comprises 229 residues: Transcriptional activator protein YukR (229 aa).

The HTH luxR-type domain maps to 157 to 222; sequence DTSGKGILSP…QAIRLGVELE (66 aa). Positions 181–200 form a DNA-binding region, H-T-H motif; the sequence is YPEIALIAGITTRTVKHHMG.

The protein belongs to the autoinducer-regulated transcriptional regulatory protein family.

Its function is as follows. Probable transcriptional activator. Binds to an autoinducer molecule. The chain is Transcriptional activator protein YukR (yukR) from Yersinia ruckeri.